A 590-amino-acid polypeptide reads, in one-letter code: UvrABC system protein C (590 aa).

Positions 15–92 (DLPGCYMMKD…IQKHKPYYNI (78 aa)) constitute a GIY-YIG domain. The UVR domain maps to 197-232 (SKIKKELEQKMETASENLEFERAAEIRDQIHYVEMT).

The protein belongs to the UvrC family. As to quaternary structure, interacts with UvrB in an incision complex.

It localises to the cytoplasm. In terms of biological role, the UvrABC repair system catalyzes the recognition and processing of DNA lesions. UvrC both incises the 5' and 3' sides of the lesion. The N-terminal half is responsible for the 3' incision and the C-terminal half is responsible for the 5' incision. The protein is UvrABC system protein C of Ligilactobacillus salivarius (strain UCC118) (Lactobacillus salivarius).